Consider the following 285-residue polypeptide: Ribosomal RNA small subunit methyltransferase A (285 aa).

6 residues coordinate S-adenosyl-L-methionine: Asn21, Leu23, Gly48, Glu69, Asp94, and Asn127.

It belongs to the class I-like SAM-binding methyltransferase superfamily. rRNA adenine N(6)-methyltransferase family. RsmA subfamily.

It is found in the cytoplasm. The catalysed reaction is adenosine(1518)/adenosine(1519) in 16S rRNA + 4 S-adenosyl-L-methionine = N(6)-dimethyladenosine(1518)/N(6)-dimethyladenosine(1519) in 16S rRNA + 4 S-adenosyl-L-homocysteine + 4 H(+). Its function is as follows. Specifically dimethylates two adjacent adenosines (A1518 and A1519) in the loop of a conserved hairpin near the 3'-end of 16S rRNA in the 30S particle. May play a critical role in biogenesis of 30S subunits. This chain is Ribosomal RNA small subunit methyltransferase A, found in Koribacter versatilis (strain Ellin345).